Reading from the N-terminus, the 180-residue chain is uncharacterized protein (180 aa).

The 180-residue stretch at 1–180 (MVEFEIVKGD…KDYERALRAV (180 aa)) folds into the Macro domain.

This is an uncharacterized protein from Thermococcus kodakarensis (strain ATCC BAA-918 / JCM 12380 / KOD1) (Pyrococcus kodakaraensis (strain KOD1)).